Here is an 892-residue protein sequence, read N- to C-terminus: Translation initiation factor IF-2 (892 aa).

Residues 88–305 (KKRTFVKRDP…SLQQGFQKPA (218 aa)) form a disordered region. Basic and acidic residues-rich tracts occupy residues 93-159 (VKRD…KDKV) and 166-216 (DMTK…EENK). Over residues 254-269 (GRGRNAKAARPAKKGK) the composition is skewed to basic residues. Positions 270–282 (HAESKADREEARA) are enriched in basic and acidic residues. One can recognise a tr-type G domain in the interval 391 to 560 (PRAPVVTIMG…LLQAEVLELK (170 aa)). Positions 400–407 (GHVDHGKT) are G1. 400 to 407 (GHVDHGKT) serves as a coordination point for GTP. Positions 425 to 429 (GITQH) are G2. The interval 446 to 449 (DTPG) is G3. GTP-binding positions include 446–450 (DTPGH) and 500–503 (NKID). A G4 region spans residues 500 to 503 (NKID). A G5 region spans residues 536-538 (SAK).

It belongs to the TRAFAC class translation factor GTPase superfamily. Classic translation factor GTPase family. IF-2 subfamily.

It localises to the cytoplasm. In terms of biological role, one of the essential components for the initiation of protein synthesis. Protects formylmethionyl-tRNA from spontaneous hydrolysis and promotes its binding to the 30S ribosomal subunits. Also involved in the hydrolysis of GTP during the formation of the 70S ribosomal complex. The polypeptide is Translation initiation factor IF-2 (Salmonella paratyphi A (strain ATCC 9150 / SARB42)).